A 559-amino-acid chain; its full sequence is Proline--tRNA ligase (559 aa).

It belongs to the class-II aminoacyl-tRNA synthetase family. ProS type 1 subfamily. In terms of assembly, homodimer.

It localises to the cytoplasm. It carries out the reaction tRNA(Pro) + L-proline + ATP = L-prolyl-tRNA(Pro) + AMP + diphosphate. Catalyzes the attachment of proline to tRNA(Pro) in a two-step reaction: proline is first activated by ATP to form Pro-AMP and then transferred to the acceptor end of tRNA(Pro). As ProRS can inadvertently accommodate and process non-cognate amino acids such as alanine and cysteine, to avoid such errors it has two additional distinct editing activities against alanine. One activity is designated as 'pretransfer' editing and involves the tRNA(Pro)-independent hydrolysis of activated Ala-AMP. The other activity is designated 'posttransfer' editing and involves deacylation of mischarged Ala-tRNA(Pro). The misacylated Cys-tRNA(Pro) is not edited by ProRS. This Ruthia magnifica subsp. Calyptogena magnifica protein is Proline--tRNA ligase.